We begin with the raw amino-acid sequence, 282 residues long: Endonuclease V (282 aa).

Mg(2+) contacts are provided by Asp-52 and Asp-126. The segment at 250–282 (SLGLPGPPTPRSPKAQRPVACPKGDSGESSALC) is disordered.

This sequence belongs to the endonuclease V family. Monomer. Interacts with PABPC1; the interaction is RNA-dependent and stimulates ENDOV activity. Mg(2+) serves as cofactor.

It is found in the cytoplasm. It localises to the nucleus. The protein localises to the nucleolus. Its subcellular location is the stress granule. Its activity is regulated as follows. Inhibited by normal intracellular concentrations of ATP. Endoribonuclease that specifically cleaves inosine-containing RNAs: cleaves RNA at the second phosphodiester bond 3' to inosine. Active against both single-stranded and double-stranded RNAs. Has strong preference for single-stranded RNAs (ssRNAs) toward double-stranded RNAs (dsRNAs). Cleaves mRNAs and tRNAs containing inosine. Also able to cleave structure-specific dsRNA substrates containing the specific sites 5'-IIUI-3' and 5'-UIUU-3'. Inosine is present in a number of RNAs following editing; the function of inosine-specific endoribonuclease is still unclear: it could either play a regulatory role in edited RNAs, or be involved in antiviral response by removing the hyperedited long viral dsRNA genome that has undergone A-to-I editing. Binds branched DNA structures. Functionally, endoribonuclease that specifically cleaves inosine-containing RNAs: cleaves RNA at the second phosphodiester bond 3' to inosine. Active against both single-stranded and double-stranded RNAs. Cleaves tRNAs containing inosine. This chain is Endonuclease V (ENDOV), found in Homo sapiens (Human).